We begin with the raw amino-acid sequence, 187 residues long: MPVEETSTPQKLPQFRYHPDPVGTGSIVADEVSCVSCEQRRPYTYTGPVYAEEELNEAICPWCIADGSAASRFDATFTDAMWAVPDDVPEDVTEEVLCRTPGFTGWLQEEWLHHCGDAAAFLGPVGASEVADLPDALDALRNEYRGYDWPADKIEEFILTLDRNGLATAYLFRCLSCGVHLAYADFA.

This sequence belongs to the UPF0167 family.

In Mycobacterium tuberculosis (strain CDC 1551 / Oshkosh), this protein is UPF0167 protein MT2352.